The primary structure comprises 632 residues: tRNA uridine 5-carboxymethylaminomethyl modification enzyme MnmG (632 aa).

Residues 13–18 (GGGHAG), valine 125, and serine 180 each bind FAD. 273–287 (GPRYCPSIEDKVMRF) contributes to the NAD(+) binding site. Glutamine 370 contributes to the FAD binding site.

This sequence belongs to the MnmG family. Homodimer. Heterotetramer of two MnmE and two MnmG subunits. FAD serves as cofactor.

It localises to the cytoplasm. Functionally, NAD-binding protein involved in the addition of a carboxymethylaminomethyl (cmnm) group at the wobble position (U34) of certain tRNAs, forming tRNA-cmnm(5)s(2)U34. The protein is tRNA uridine 5-carboxymethylaminomethyl modification enzyme MnmG of Vibrio vulnificus (strain YJ016).